The chain runs to 752 residues: DNA topoisomerase 4 subunit A (752 aa).

The Topo IIA-type catalytic domain occupies 31 to 494; the sequence is LPFIGDGLKP…EAKAMSEHDM (464 aa). The O-(5'-phospho-DNA)-tyrosine intermediate role is filled by Y120. Disordered regions lie at residues 472 to 492 and 718 to 752; these read YGDD…MSEH and TGER…DSEE. Composition is skewed to basic and acidic residues over residues 473 to 492 and 732 to 743; these read GDDR…MSEH and QRIDRVEIDSPR.

The protein belongs to the type II topoisomerase GyrA/ParC subunit family. ParC type 1 subfamily. Heterotetramer composed of ParC and ParE.

Its subcellular location is the cell membrane. It carries out the reaction ATP-dependent breakage, passage and rejoining of double-stranded DNA.. Topoisomerase IV is essential for chromosome segregation. It relaxes supercoiled DNA. Performs the decatenation events required during the replication of a circular DNA molecule. The protein is DNA topoisomerase 4 subunit A of Escherichia coli O157:H7.